Reading from the N-terminus, the 1036-residue chain is Zinc finger protein 532 (1036 aa).

Disordered regions lie at residues 26-92 (PKAA…LHNG), 106-206 (GAKS…EAES), 220-265 (RKAE…PSSK), and 281-362 (AASD…KVRI). Residues 32–52 (SGHDDHESHIKQNAHVDDDSH) are compositionally biased toward basic and acidic residues. A phosphoserine mark is found at S130, S133, and S134. The span at 136–151 (EEFEDDEKIEVDDPPD) shows a compositional bias: acidic residues. K175 is subject to N6-acetyllysine. Residues 182–193 (ENSSKTGVSTSG) show a composition bias toward polar residues. 2 stretches are compositionally biased toward basic and acidic residues: residues 194 to 205 (HTDKNKVKREAE) and 220 to 249 (RKAE…EKSD). The segment covering 253-265 (AAAASSKTKPSSK) has biased composition (low complexity). The span at 302–314 (EVNDSPKAADKSP) shows a compositional bias: basic and acidic residues. A phosphoserine mark is found at S306 and S313. A compositionally biased stretch (low complexity) spans 336 to 353 (SVSSENSSKGSPSSPVGS). At S433 the chain carries Phosphoserine. Glycyl lysine isopeptide (Lys-Gly) (interchain with G-Cter in SUMO2) cross-links involve residues K458 and K515. Residues 615 to 634 (YKCLECGDAFALEKSLSQHY) form a C2H2-type 1; degenerate zinc finger. The C2H2-type 2; degenerate zinc finger occupies 751–775 (LKCLECNEVFQDEPSLATHFQHAAD). A C2H2-type 3 zinc finger spans residues 784 to 807 (HPCRQCDKSFSSSHSLCRHNRIKH). Residues 814-840 (YACSHCPDSRRTFTKRLMLERHIQLMH) form a C2H2-type 4; degenerate zinc finger. The disordered stretch occupies residues 847–877 (VKELSDDAGDVTNDEEEEAEIKEDAKVPSPK). A compositionally biased stretch (acidic residues) spans 852–867 (DDAGDVTNDEEEEAEI). Positions 868–877 (KEDAKVPSPK) are enriched in basic and acidic residues. S875 carries the post-translational modification Phosphoserine. Residues K879 and K902 each participate in a glycyl lysine isopeptide (Lys-Gly) (interchain with G-Cter in SUMO2) cross-link. 2 C2H2-type zinc fingers span residues 938 to 961 (HQCR…FIVH) and 999 to 1021 (RKCK…MRTH). The tract at residues 966–1000 (PQPVSKQNGAGEDSQQENKPSPEDEAAEGAASDRK) is disordered.

The protein belongs to the krueppel C2H2-type zinc-finger protein family.

The protein resides in the nucleus. Its function is as follows. May be involved in transcriptional regulation. The sequence is that of Zinc finger protein 532 (Znf532) from Mus musculus (Mouse).